We begin with the raw amino-acid sequence, 613 residues long: Activating transcription factor 3 (613 aa).

2 disordered regions span residues 77-115 and 133-218; these read RHFNGHPNGQSHSQDSSHSSCSGSPLDSPAGTATTPSVQ and KRKL…NKIA. Residues 85–105 are compositionally biased toward low complexity; it reads GQSHSQDSSHSSCSGSPLDSP. Polar residues predominate over residues 138–147; sequence TCDSSSGSEQ. A compositionally biased stretch (low complexity) spans 158–175; sequence NHNGHSGSSNNYSGSMSN. Residues 178–191 are compositionally biased toward acidic residues; the sequence is DLDDDCEESSDDDS. Residues 205 to 268 enclose the bZIP domain; it reads EDRRRRRRER…QKLVDMLKSH (64 aa). The interval 207–229 is basic motif; it reads RRRRRRERNKIAATKCRMKKRER. The leucine-zipper stretch occupies residues 233–261; the sequence is LIKESEVLDTQNVELKNQVRQLETERQKL. The segment at 337–446 is disordered; it reads PNGYCKPSPS…SSNATSSTTP (110 aa). Over residues 356–368 the composition is skewed to low complexity; the sequence is QQQQQQQQQQQPQ. The span at 369 to 389 shows a compositional bias: polar residues; the sequence is SLNPAGNNVIDQQHANPSPSL. A compositionally biased stretch (low complexity) spans 402–446; it reads GSASNHPSHNNNNNNNNSSGASSNTSNNNSNISSHSSNATSSTTP.

This sequence belongs to the bZIP family. ATF subfamily. Interacts with Jra/jun; the interaction enhances the DNA-binding activity of Atf3. Moderate expression in some regions of the larval nervous system, the ring gland and imaginal disks. High expression in larval gut, excretory malpighian tubules, salivary glands, and, to a lesser extent, the fat body where levels are approximately 2.5-fold less than the gut.

It localises to the nucleus. Its function is as follows. Transcription factor which binds to the cAMP response element (CRE). Regulates metabolic and innate immune homeostasis, possibly by controlling appropriate expression of genes involved in peritrophic matrix composition and ensuring the normal digestive and immune function of the gut. Required for the expression of odorant receptors Or43b and Or47b. This Drosophila melanogaster (Fruit fly) protein is Activating transcription factor 3.